The primary structure comprises 977 residues: Fc receptor-like protein 5 (977 aa).

The N-terminal stretch at 1–15 is a signal peptide; sequence MLLWVILLVLAPVSG. Topologically, residues 16–851 are extracellular; sequence QFARTPRPII…ANRSGPFATG (836 aa). Ig-like C2-type domains follow at residues 23 to 101, 188 to 271, 287 to 374, 380 to 463, 473 to 556, 566 to 651, 659 to 744, and 752 to 834; these read PIIF…LDFS, PFTR…SVIS, PVLT…LSVT, PVLN…KAVS, PVLT…EVVS, PILT…ISLS, PILT…VTLK, and PVLT…ETVT. 3 disulfide bridges follow: cysteine 44-cysteine 85, cysteine 211-cysteine 260, and cysteine 308-cysteine 355. Asparagine 383 carries an N-linked (GlcNAc...) asparagine glycan. Disulfide bonds link cysteine 401–cysteine 448, cysteine 494–cysteine 541, cysteine 587–cysteine 634, cysteine 680–cysteine 727, and cysteine 773–cysteine 819. Residues 852–872 form a helical membrane-spanning segment; the sequence is VAGGLLSIAGLAAGALLLYCW. The Cytoplasmic portion of the chain corresponds to 873–977; the sequence is LSRKAGRKPA…LFLASSAPHR (105 aa). The disordered stretch occupies residues 879 to 898; that stretch reads RKPASDPARSPSDSDSQEPT. The span at 883-892 shows a compositional bias: low complexity; that stretch reads SDPARSPSDS. Short sequence motifs (ITIM motif) lie at residues 897–902, 910–915, 922–927, and 952–957; these read PTYHNV, PVYTNA, VVYSEV, and IIYSEV.

Interacts with CR2. Interacts with CD19. Expressed in marginal zone B-cells, immunoblasts, tonsillar germinal center centrocytes and in the intraepithelial and interfollicular regions of the tonsil. Expressed in many lymphoma cell lines and on hairy cell leukemia cells. Isoform 1, isoform 3, isoform 4 and isoform 5 are detected in lymph node, spleen, bone marrow, and small intestine with preponderance of isoform 3. Expressed in mature and memory B-cells and down-regulated in germinal center cells (at protein level).

Its subcellular location is the cell membrane. Plays an important role in B-cell response to antigen that acts both as a negative or positive coreceptor. Inhibits B-cell receptor (BCR) signaling in the absence of CR2 stimulation but engagement with CR2 and the BCR lead to a superior calcium response compared to CR2 and BCR costimulation. May be involved in B-cell development and differentiation in peripheral lymphoid organs and may be useful markers of B-cell stages. May have an immunoregulatory role in marginal zone B-cells. May play a role in fertilization. This Homo sapiens (Human) protein is Fc receptor-like protein 5 (FCRL5).